Reading from the N-terminus, the 67-residue chain is Small ribosomal subunit protein eS17 (67 aa).

It belongs to the eukaryotic ribosomal protein eS17 family. Part of the 30S ribosomal subunit.

The sequence is that of Small ribosomal subunit protein eS17 from Pyrococcus furiosus (strain ATCC 43587 / DSM 3638 / JCM 8422 / Vc1).